A 181-amino-acid chain; its full sequence is Transcription antitermination protein NusB (181 aa).

Residues 1–36 form a disordered region; it reads MTEDNNKAAGAKPRPARQVRTGLTSTGARKASAKSN.

It belongs to the NusB family.

Involved in transcription antitermination. Required for transcription of ribosomal RNA (rRNA) genes. Binds specifically to the boxA antiterminator sequence of the ribosomal RNA (rrn) operons. In Variovorax paradoxus (strain S110), this protein is Transcription antitermination protein NusB.